A 379-amino-acid chain; its full sequence is Chaperone protein DnaJ (379 aa).

The J domain maps to 5–69 (EFYDRLGVSK…QKRAAYDQYG (65 aa)). The segment at 135–217 (GAEKEVSYNR…CHGTGHEKKT (83 aa)) adopts a CR-type zinc-finger fold. Zn(2+)-binding residues include cysteine 148, cysteine 151, cysteine 165, cysteine 168, cysteine 191, cysteine 194, cysteine 205, and cysteine 208. CXXCXGXG motif repeat units lie at residues 148 to 155 (CHTCSGSG), 165 to 172 (CQKCHGSG), 191 to 198 (CDVCQGSG), and 205 to 212 (CPTCHGTG).

Belongs to the DnaJ family. As to quaternary structure, homodimer. The cofactor is Zn(2+).

Its subcellular location is the cytoplasm. In terms of biological role, participates actively in the response to hyperosmotic and heat shock by preventing the aggregation of stress-denatured proteins and by disaggregating proteins, also in an autonomous, DnaK-independent fashion. Unfolded proteins bind initially to DnaJ; upon interaction with the DnaJ-bound protein, DnaK hydrolyzes its bound ATP, resulting in the formation of a stable complex. GrpE releases ADP from DnaK; ATP binding to DnaK triggers the release of the substrate protein, thus completing the reaction cycle. Several rounds of ATP-dependent interactions between DnaJ, DnaK and GrpE are required for fully efficient folding. Also involved, together with DnaK and GrpE, in the DNA replication of plasmids through activation of initiation proteins. The polypeptide is Chaperone protein DnaJ (Streptococcus agalactiae serotype V (strain ATCC BAA-611 / 2603 V/R)).